A 385-amino-acid polypeptide reads, in one-letter code: Isomaltose glucohydrolase (385 aa).

Substrate is bound at residue W125. The active-site Proton acceptor is D175. E178 acts as the Proton donor in catalysis. The active-site Proton acceptor is the E335.

It belongs to the glycosyl hydrolase 15 family.

Its subcellular location is the cytoplasm. It catalyses the reaction isomaltose + H2O = beta-D-glucose + D-glucose. Functionally, involved in the intracellular degradation of the cyclic tetrasaccharide cyclobis-(1-6)-alpha-nigerosyl (CNN) formed extracellularly from starch. Catalyzes the hydrolysis of alpha-1,6-glucosidic linkage from the non-reducing end of isomaltose to yield beta-D-glucose and D-glucose. Can also act on panose and isomaltotriose at a lower rate. It displays low or no activity toward CNN and the general GH15 enzyme substrates such as maltose, soluble starch or dextran. This chain is Isomaltose glucohydrolase, found in Kribbella flavida (strain DSM 17836 / JCM 10339 / NBRC 14399).